The primary structure comprises 175 residues: Sec-independent protein translocase protein TatB (175 aa).

A helical transmembrane segment spans residues 1 to 21; the sequence is MLDLGLSKMALIGVVALVVLG. Disordered stretches follow at residues 96–115 and 153–175; these read VSPG…AASG and VQSG…ARFL. The segment covering 160-175 has biased composition (basic residues); the sequence is VARHRPASLRRPARFL.

Belongs to the TatB family. The Tat system comprises two distinct complexes: a TatABC complex, containing multiple copies of TatA, TatB and TatC subunits, and a separate TatA complex, containing only TatA subunits. Substrates initially bind to the TatABC complex, which probably triggers association of the separate TatA complex to form the active translocon.

The protein resides in the cell inner membrane. Part of the twin-arginine translocation (Tat) system that transports large folded proteins containing a characteristic twin-arginine motif in their signal peptide across membranes. Together with TatC, TatB is part of a receptor directly interacting with Tat signal peptides. TatB may form an oligomeric binding site that transiently accommodates folded Tat precursor proteins before their translocation. The chain is Sec-independent protein translocase protein TatB from Burkholderia mallei (strain ATCC 23344).